A 477-amino-acid chain; its full sequence is Glutamate--tRNA ligase (477 aa).

The 'HIGH' region motif lies at 12–22; that stretch reads PSPTGMFHVGG. Zn(2+) contacts are provided by Cys-106, Cys-108, Cys-128, and Asp-130. Positions 238–242 match the 'KMSKS' region motif; sequence KLSKR. Residue Lys-241 participates in ATP binding.

This sequence belongs to the class-I aminoacyl-tRNA synthetase family. Glutamate--tRNA ligase type 1 subfamily. As to quaternary structure, monomer. The cofactor is Zn(2+).

It localises to the cytoplasm. The catalysed reaction is tRNA(Glu) + L-glutamate + ATP = L-glutamyl-tRNA(Glu) + AMP + diphosphate. Catalyzes the attachment of glutamate to tRNA(Glu) in a two-step reaction: glutamate is first activated by ATP to form Glu-AMP and then transferred to the acceptor end of tRNA(Glu). This is Glutamate--tRNA ligase from Thermobifida fusca (strain YX).